Here is a 138-residue protein sequence, read N- to C-terminus: Large ribosomal subunit protein bL19 (138 aa).

This sequence belongs to the bacterial ribosomal protein bL19 family.

Its function is as follows. This protein is located at the 30S-50S ribosomal subunit interface and may play a role in the structure and function of the aminoacyl-tRNA binding site. The sequence is that of Large ribosomal subunit protein bL19 from Rickettsia peacockii (strain Rustic).